Reading from the N-terminus, the 1279-residue chain is ATP-dependent helicase/nuclease subunit A (1279 aa).

In terms of domain architecture, UvrD-like helicase ATP-binding spans 4-499 (TKWTDEQRQA…VKLFKNFRSR (496 aa)). Residue 25–32 (AGAGAGKT) coordinates ATP. Residues 526–853 (EEALKVGASY…RIMSIHKSKG (328 aa)) form the UvrD-like helicase C-terminal domain.

This sequence belongs to the helicase family. AddA subfamily. As to quaternary structure, heterodimer of AddA and AddB/RexB. Mg(2+) is required as a cofactor.

The catalysed reaction is Couples ATP hydrolysis with the unwinding of duplex DNA by translocating in the 3'-5' direction.. The enzyme catalyses ATP + H2O = ADP + phosphate + H(+). The heterodimer acts as both an ATP-dependent DNA helicase and an ATP-dependent, dual-direction single-stranded exonuclease. Recognizes the chi site generating a DNA molecule suitable for the initiation of homologous recombination. The AddA nuclease domain is required for chi fragment generation; this subunit has the helicase and 3' -&gt; 5' nuclease activities. The sequence is that of ATP-dependent helicase/nuclease subunit A from Clostridium botulinum (strain Hall / ATCC 3502 / NCTC 13319 / Type A).